Consider the following 260-residue polypeptide: UPF0246 protein Tola_0968 (260 aa).

Belongs to the UPF0246 family.

In Tolumonas auensis (strain DSM 9187 / NBRC 110442 / TA 4), this protein is UPF0246 protein Tola_0968.